Consider the following 275-residue polypeptide: Proteasome subunit beta (275 aa).

Residues 1-52 (MQDTTANQVAANATSSFTEHLQRNRPGLLPYNQPFPAALTGAGSQPLQVPHA) constitute a propeptide, removed in mature form; by autocatalysis. T53 (nucleophile) is an active-site residue.

This sequence belongs to the peptidase T1B family. In terms of assembly, the 20S proteasome core is composed of 14 alpha and 14 beta subunits that assemble into four stacked heptameric rings, resulting in a barrel-shaped structure. The two inner rings, each composed of seven catalytic beta subunits, are sandwiched by two outer rings, each composed of seven alpha subunits. The catalytic chamber with the active sites is on the inside of the barrel. Has a gated structure, the ends of the cylinder being occluded by the N-termini of the alpha-subunits. Is capped by the proteasome-associated ATPase, ARC.

It localises to the cytoplasm. It carries out the reaction Cleavage of peptide bonds with very broad specificity.. The protein operates within protein degradation; proteasomal Pup-dependent pathway. With respect to regulation, the formation of the proteasomal ATPase ARC-20S proteasome complex, likely via the docking of the C-termini of ARC into the intersubunit pockets in the alpha-rings, may trigger opening of the gate for substrate entry. Interconversion between the open-gate and close-gate conformations leads to a dynamic regulation of the 20S proteasome proteolysis activity. Functionally, component of the proteasome core, a large protease complex with broad specificity involved in protein degradation. In Arthrobacter sp. (strain FB24), this protein is Proteasome subunit beta.